Consider the following 406-residue polypeptide: NADH-quinone oxidoreductase subunit D (406 aa).

Belongs to the complex I 49 kDa subunit family. In terms of assembly, NDH-1 is composed of 14 different subunits. Subunits NuoB, C, D, E, F, and G constitute the peripheral sector of the complex.

The protein localises to the cell inner membrane. It catalyses the reaction a quinone + NADH + 5 H(+)(in) = a quinol + NAD(+) + 4 H(+)(out). NDH-1 shuttles electrons from NADH, via FMN and iron-sulfur (Fe-S) centers, to quinones in the respiratory chain. The immediate electron acceptor for the enzyme in this species is believed to be ubiquinone. Couples the redox reaction to proton translocation (for every two electrons transferred, four hydrogen ions are translocated across the cytoplasmic membrane), and thus conserves the redox energy in a proton gradient. This Rhizorhabdus wittichii (strain DSM 6014 / CCUG 31198 / JCM 15750 / NBRC 105917 / EY 4224 / RW1) (Sphingomonas wittichii) protein is NADH-quinone oxidoreductase subunit D.